Consider the following 68-residue polypeptide: Beta-defensin 1 (68 aa).

An N-terminal signal peptide occupies residues 1-21 (MRTSYLLLFTLCLLLSEIASG). Residues 22–32 (GNFLTGLGHRS) constitute a propeptide that is removed on maturation. Intrachain disulfides connect Cys37–Cys66, Cys44–Cys59, and Cys49–Cys67.

This sequence belongs to the beta-defensin family. In terms of assembly, monomer. Homodimer.

The protein resides in the secreted. It is found in the membrane. Has bactericidal activity. May act as a ligand for C-C chemokine receptor CCR6. Positively regulates the sperm motility and bactericidal activity in a CCR6-dependent manner. Binds to CCR6 and triggers Ca2+ mobilization in the sperm which is important for its motility. This Gorilla gorilla gorilla (Western lowland gorilla) protein is Beta-defensin 1 (DEFB1).